We begin with the raw amino-acid sequence, 653 residues long: Fructose-1,6-bisphosphatase class 3 2 (653 aa).

This sequence belongs to the FBPase class 3 family. The cofactor is Mn(2+).

It catalyses the reaction beta-D-fructose 1,6-bisphosphate + H2O = beta-D-fructose 6-phosphate + phosphate. The protein operates within carbohydrate biosynthesis; gluconeogenesis. The polypeptide is Fructose-1,6-bisphosphatase class 3 2 (Clostridium beijerinckii (strain ATCC 51743 / NCIMB 8052) (Clostridium acetobutylicum)).